The following is a 975-amino-acid chain: DNA primase (975 aa).

A CHC2-type zinc finger spans residues 919–958 (CIQHDHRDGRENVQFFLDFRPESATTIWTTLWSRCFSRKC).

The protein belongs to the herpesviridae DNA primase family. In terms of assembly, associates with the helicase and the primase-associated factor to form the helicase-primase factor.

It localises to the host nucleus. Its function is as follows. Essential component of the helicase/primase complex. Unwinds the DNA at the replication forks and generates single-stranded DNA for both leading and lagging strand synthesis. The primase initiates primer synthesis and thereby produces large amount of short RNA primers on the lagging strand that the polymerase elongates using dNTPs. In Elephas maximus (Indian elephant), this protein is DNA primase.